Here is a 247-residue protein sequence, read N- to C-terminus: Proteasome subunit alpha (247 aa).

This sequence belongs to the peptidase T1A family. The 20S proteasome core is composed of 14 alpha and 14 beta subunits that assemble into four stacked heptameric rings, resulting in a barrel-shaped structure. The two inner rings, each composed of seven catalytic beta subunits, are sandwiched by two outer rings, each composed of seven alpha subunits. The catalytic chamber with the active sites is on the inside of the barrel. Has a gated structure, the ends of the cylinder being occluded by the N-termini of the alpha-subunits. Is capped at one or both ends by the proteasome regulatory ATPase, PAN.

The protein localises to the cytoplasm. The formation of the proteasomal ATPase PAN-20S proteasome complex, via the docking of the C-termini of PAN into the intersubunit pockets in the alpha-rings, triggers opening of the gate for substrate entry. Interconversion between the open-gate and close-gate conformations leads to a dynamic regulation of the 20S proteasome proteolysis activity. Its function is as follows. Component of the proteasome core, a large protease complex with broad specificity involved in protein degradation. This is Proteasome subunit alpha from Methanosarcina thermophila.